The primary structure comprises 534 residues: MLSLLETKIIEPFMVVRQTLAPLRLSRWQIFKHMTRILIFSSNTRTIIFCVLMSLVGYIVSRIIWGRQEKYPDHGLPIVKTNDYHFDNIVAEGKRLYPNQAFMGINKRYKFVIYPSSSWEELKRIPEQTASIMDFQHVCNSGEWSLVGGETHELVKTITAELTRSLPARVPNRQQDAKMTFDTIIGHCPEEKGFNLLMTSLEIIAKINACTFVGRELGANKSWVTAVVYSPLWVYFAVTLCNATPDILRPLLRPLFFLPALRNYWNMQKLLKPKLDREMETFRQTDDKRKLLVPKSDQDLPFTHFLLSRYTEAAATIKQLVIDYIQVSYTSTPTTASALFHALWELAQHPEAAEVMRRELATVMIDGNLPKTHLQELKRMDSFLRESFRLHPITRFTLQRYVKEPFQLSDGSRIPPGVMAVVDAQEINRSPEIWENPDEFDMDRFYRLREISGNDNRYHFVTTSSNSPGWGDGTQACPGRFFATSTLKIVMAHIVMNYDVSLRKVAPLKSQPLVNGSYSPDDSVEIFFKSRNVE.

Residues 46 to 66 (TIIFCVLMSLVGYIVSRIIWG) form a helical membrane-spanning segment. Asn-220 is a glycosylation site (N-linked (GlcNAc...) asparagine). Heme is bound at residue Cys-477. A glycan (N-linked (GlcNAc...) asparagine) is linked at Asn-515.

This sequence belongs to the cytochrome P450 family. Heme serves as cofactor.

Its subcellular location is the membrane. Its pathway is secondary metabolite biosynthesis. Its function is as follows. Cytochrome P450 monooxygenase; part of the gene cluster that mediates the biosynthesis of a tyrosine-derived cytochalasan acting as a fungal signal recognized by resistant rice plants and leads to avirulence in Pi33 resistant rice cultivars. The first step in the pathway is catalyzed by the hybrid PKS-NRPS ACE1, assisted by the enoyl reductase RAP1, that are responsible for fusion of the tyrosine precursor and the polyketide backbone. The polyketide synthase module (PKS) of ACE1 is responsible for the synthesis of the polyketide backbone and the downstream nonribosomal peptide synthetase (NRPS) amidates the carboxyl end of the polyketide with the tyrosine precursor. Because ACE1 lacks a designated enoylreductase (ER) domain, the required activity is provided the enoyl reductase RAP1. Reduction by the hydrolyase ORFZ, followed by dehydration and intra-molecular Diels-Alder cyclization by the Diels-Alderase ORF3 then yield the required isoindolone-fused macrocycle. A number of oxidative steps catalyzed by the tailoring enzymes identified within the cluster, including cytochrome P450 monooxygenases CYP1 to CYP4, the FAD-linked oxidoreductase OXR2 and the short-chain dehydrogenase/reductase OXR1, are further required to afford the final cytochalasans that confer avirulence and which have still to be identified. The monooxygenase CYP1 has been shown to be a site-selective C-18 hydroxylase whereas the function of CYP3 is the site-selective epoxidation of the C-6/C-7 olefin that is present in some intermediate compounds. Finally, SYN2 and RAP2 are not required for avirulence in Pi33 resistant rice cultivars. The polypeptide is Cytochrome P450 monooxygenase CYP4 (Pyricularia oryzae (strain 70-15 / ATCC MYA-4617 / FGSC 8958) (Rice blast fungus)).